The sequence spans 245 residues: Bis(5'-nucleosyl)-tetraphosphatase PrpE [asymmetrical] (245 aa).

It belongs to the PrpE family. Ni(2+) is required as a cofactor.

It catalyses the reaction P(1),P(4)-bis(5'-guanosyl) tetraphosphate + H2O = GMP + GTP + 2 H(+). Its function is as follows. Asymmetrically hydrolyzes Ap4p to yield AMP and ATP. In Geobacillus thermodenitrificans (strain NG80-2), this protein is Bis(5'-nucleosyl)-tetraphosphatase PrpE [asymmetrical].